Reading from the N-terminus, the 211-residue chain is Pyridoxine/pyridoxamine 5'-phosphate oxidase (211 aa).

Substrate contacts are provided by residues 8 to 11 (RKNY) and Lys-66. FMN-binding positions include 61 to 66 (RIVLLK), 76 to 77 (FT), Lys-83, and Gln-105. Residues Tyr-123, Arg-127, and Ser-131 each coordinate substrate. FMN contacts are provided by residues 140 to 141 (QS) and Trp-184. Position 190–192 (190–192 (RLH)) interacts with substrate. Arg-194 contacts FMN.

It belongs to the pyridoxamine 5'-phosphate oxidase family. As to quaternary structure, homodimer. FMN serves as cofactor.

The catalysed reaction is pyridoxamine 5'-phosphate + O2 + H2O = pyridoxal 5'-phosphate + H2O2 + NH4(+). It carries out the reaction pyridoxine 5'-phosphate + O2 = pyridoxal 5'-phosphate + H2O2. It functions in the pathway cofactor metabolism; pyridoxal 5'-phosphate salvage; pyridoxal 5'-phosphate from pyridoxamine 5'-phosphate: step 1/1. The protein operates within cofactor metabolism; pyridoxal 5'-phosphate salvage; pyridoxal 5'-phosphate from pyridoxine 5'-phosphate: step 1/1. Its function is as follows. Catalyzes the oxidation of either pyridoxine 5'-phosphate (PNP) or pyridoxamine 5'-phosphate (PMP) into pyridoxal 5'-phosphate (PLP). This chain is Pyridoxine/pyridoxamine 5'-phosphate oxidase, found in Polynucleobacter asymbioticus (strain DSM 18221 / CIP 109841 / QLW-P1DMWA-1) (Polynucleobacter necessarius subsp. asymbioticus).